The sequence spans 508 residues: Light-independent protochlorophyllide reductase subunit B (508 aa).

Asp36 provides a ligand contact to [4Fe-4S] cluster. The active-site Proton donor is the Asp294. 429–430 (GM) is a binding site for substrate.

The protein belongs to the ChlB/BchB/BchZ family. As to quaternary structure, protochlorophyllide reductase is composed of three subunits; ChlL, ChlN and ChlB. Forms a heterotetramer of two ChlB and two ChlN subunits. It depends on [4Fe-4S] cluster as a cofactor.

The catalysed reaction is chlorophyllide a + oxidized 2[4Fe-4S]-[ferredoxin] + 2 ADP + 2 phosphate = protochlorophyllide a + reduced 2[4Fe-4S]-[ferredoxin] + 2 ATP + 2 H2O. It functions in the pathway porphyrin-containing compound metabolism; chlorophyll biosynthesis (light-independent). Functionally, component of the dark-operative protochlorophyllide reductase (DPOR) that uses Mg-ATP and reduced ferredoxin to reduce ring D of protochlorophyllide (Pchlide) to form chlorophyllide a (Chlide). This reaction is light-independent. The NB-protein (ChlN-ChlB) is the catalytic component of the complex. In Acaryochloris marina (strain MBIC 11017), this protein is Light-independent protochlorophyllide reductase subunit B.